A 209-amino-acid chain; its full sequence is MSGRFIVLDGIDGCGKSTQLDHLLGWLPGSGLMPAGAELISTREPGGTPLGRSVRELLLHTRAEQAPAPTAELLLYAADRAQHVERLILPTLERGDWVISDRFSGSTMAYQGYGRGLDRQLIDQLERIATAGVQPDLTLWLTLPLEESLRRRQGDQADRIEAEGQVFLQRVIDGFAAIAEQRQWSAIAADRPPEAVSRALERELMDRLG.

10–17 serves as a coordination point for ATP; sequence GIDGCGKS.

Belongs to the thymidylate kinase family.

The enzyme catalyses dTMP + ATP = dTDP + ADP. Functionally, phosphorylation of dTMP to form dTDP in both de novo and salvage pathways of dTTP synthesis. This is Thymidylate kinase from Parasynechococcus marenigrum (strain WH8102).